The sequence spans 259 residues: Indole-3-glycerol phosphate synthase (259 aa).

Belongs to the TrpC family.

The catalysed reaction is 1-(2-carboxyphenylamino)-1-deoxy-D-ribulose 5-phosphate + H(+) = (1S,2R)-1-C-(indol-3-yl)glycerol 3-phosphate + CO2 + H2O. Its pathway is amino-acid biosynthesis; L-tryptophan biosynthesis; L-tryptophan from chorismate: step 4/5. This chain is Indole-3-glycerol phosphate synthase, found in Rhodopirellula baltica (strain DSM 10527 / NCIMB 13988 / SH1).